Reading from the N-terminus, the 936-residue chain is DNA topoisomerase 1 (936 aa).

A Toprim domain is found at 15–139 (RRLVIVESPT…VKRMVFHEIT (125 aa)). Glu-21 and Asp-108 together coordinate Mg(2+). The 458-residue stretch at 154-611 (DIALVDAQET…FYFGGEHGVE (458 aa)) folds into the Topo IA-type catalytic domain. The segment at 188–193 (SAGRVQ) is interaction with DNA. Tyr-339 acts as the O-(5'-phospho-DNA)-tyrosine intermediate in catalysis. 4 disordered regions span residues 661-688 (LERMVDDPDNPGEQKPQRANLKEDLTPD), 732-767 (VLPEPEDGGDDGTAGTPAKKGKKPTGPKPRTGSLFR), 841-884 (KRRG…ETNA), and 903-936 (LLADRRARGPVKKKAPAKKAAKKAPAKKAAAKKA). Positions 910-936 (RGPVKKKAPAKKAAKKAPAKKAAAKKA) are enriched in basic residues.

The protein belongs to the type IA topoisomerase family. As to quaternary structure, monomer. Mg(2+) is required as a cofactor.

It carries out the reaction ATP-independent breakage of single-stranded DNA, followed by passage and rejoining.. Functionally, releases the supercoiling and torsional tension of DNA, which is introduced during the DNA replication and transcription, by transiently cleaving and rejoining one strand of the DNA duplex. Introduces a single-strand break via transesterification at a target site in duplex DNA. The scissile phosphodiester is attacked by the catalytic tyrosine of the enzyme, resulting in the formation of a DNA-(5'-phosphotyrosyl)-enzyme intermediate and the expulsion of a 3'-OH DNA strand. The free DNA strand then undergoes passage around the unbroken strand, thus removing DNA supercoils. Finally, in the religation step, the DNA 3'-OH attacks the covalent intermediate to expel the active-site tyrosine and restore the DNA phosphodiester backbone. In terms of biological role, relaxes negatively (but not positively) supercoiled DNA, concatanates and knots circular ssDNA at 52 but not 37 degrees Celsius. Preferentially nicks supercoiled DNA at C(G/T)CTT, cutting between the TT residues, binds ss and dsDNA with the recognition site. The polypeptide is DNA topoisomerase 1 (Mycolicibacterium smegmatis (strain ATCC 700084 / mc(2)155) (Mycobacterium smegmatis)).